A 37-amino-acid chain; its full sequence is Cytochrome bd-I ubiquinol oxidase subunit X (37 aa).

A helical transmembrane segment spans residues 4-24; sequence FAWILGTLLACSFGVITALAL.

This sequence belongs to the cytochrome ubiquinol oxidase subunit X family. In terms of assembly, may be a subunit of cytochrome bd-I ubiquinol oxidase. Probably interacts with CydA and CydB.

It localises to the cell inner membrane. The enzyme catalyses 2 a ubiquinol + O2(in) + 4 H(+)(in) = 2 a ubiquinone + 2 H2O(in) + 4 H(+)(out). It functions in the pathway energy metabolism; oxidative phosphorylation. Its function is as follows. Required for correct functioning of cytochrome bd-I oxidase. This protein and AppX may have some functional overlap. The chain is Cytochrome bd-I ubiquinol oxidase subunit X (cydX) from Escherichia coli (strain K12).